The sequence spans 116 residues: Large ribosomal subunit protein bL17 (116 aa).

The protein belongs to the bacterial ribosomal protein bL17 family. Part of the 50S ribosomal subunit. Contacts protein L32.

The chain is Large ribosomal subunit protein bL17 from Cyanothece sp. (strain PCC 7425 / ATCC 29141).